Consider the following 501-residue polypeptide: Actin-binding protein WASF3 (501 aa).

Residues 57–93 adopt a coiled-coil conformation; sequence NEANNFYIRANSLQDRIDRLAVKVTQLDSTVEEVSLQ. Y151 is subject to Phosphotyrosine; by ABL1. A coiled-coil region spans residues 162–206; it reads KEKMLQDTEDKRKEKRRQKEQKRVDGTTREVKKVRKARNRRQEWN. The segment at 170-443 is disordered; sequence EDKRKEKRRQ…PPISDARSDL (274 aa). Basic and acidic residues predominate over residues 182–192; that stretch reads QKRVDGTTREV. The segment covering 219-237 has biased composition (polar residues); it reads RLSQSVHHGASSEGSLSPD. Residue Y248 is modified to Phosphotyrosine; by ABL1. Residues 256-267 show a composition bias toward polar residues; sequence HALQAQPATPSY. Pro residues predominate over residues 302–312; it reads QQPPPPPPPQA. A Phosphotyrosine; by ABL1 modification is found at Y337. Composition is skewed to pro residues over residues 341–352 and 394–410; these read SGPPPPPPPPMI and APPP…PPGP. A compositionally biased stretch (low complexity) spans 411–422; the sequence is SSLSSSPMHGPP. Positions 439-456 constitute a WH2 domain; that stretch reads ARSDLLAAIRMGIQLKKV. Y485 carries the post-translational modification Phosphotyrosine; by ABL1.

It belongs to the SCAR/WAVE family. In terms of assembly, binds actin and the Arp2/3 complex. In terms of processing, phosphorylation by ABL1 promotes lamellipodia formation and cell migration.

The protein localises to the cytoplasm. It localises to the cytoskeleton. In terms of biological role, downstream effector molecules involved in the transmission of signals from tyrosine kinase receptors and small GTPases to the actin cytoskeleton. Plays a role in the regulation of cell morphology and cytoskeletal organization. Required in the control of cell shape. The chain is Actin-binding protein WASF3 (Wasf3) from Mus musculus (Mouse).